The chain runs to 186 residues: Ribosome-recycling factor (186 aa).

This sequence belongs to the RRF family.

It localises to the cytoplasm. Functionally, responsible for the release of ribosomes from messenger RNA at the termination of protein biosynthesis. May increase the efficiency of translation by recycling ribosomes from one round of translation to another. This is Ribosome-recycling factor from Amoebophilus asiaticus (strain 5a2).